The sequence spans 186 residues: Probable chorismate pyruvate-lyase (186 aa).

Substrate is bound by residues arginine 78, leucine 116, and glutamate 175.

Belongs to the UbiC family.

Its subcellular location is the cytoplasm. The enzyme catalyses chorismate = 4-hydroxybenzoate + pyruvate. The protein operates within cofactor biosynthesis; ubiquinone biosynthesis. Its function is as follows. Removes the pyruvyl group from chorismate, with concomitant aromatization of the ring, to provide 4-hydroxybenzoate (4HB) for the ubiquinone pathway. This Psychromonas ingrahamii (strain DSM 17664 / CCUG 51855 / 37) protein is Probable chorismate pyruvate-lyase.